Reading from the N-terminus, the 154-residue chain is Minor structural pilin EpdC (154 aa).

Residues 1-13 (MIKMLQLPFNKKG) constitute a propeptide that is removed on maturation. A QXSXEXXXL motif is present at residues 14–24 (QVSFDFIIAML).

Post-translationally, the N-terminus is cleaved by the prepilin peptidase EppA, which recognizes the class III signal sequence.

The protein localises to the secreted. The protein resides in the cell surface. Its subcellular location is the fimbrium. Minor component of the type IV-like pili. Essential for pili formation. The protein is Minor structural pilin EpdC of Methanococcus maripaludis (strain DSM 14266 / JCM 13030 / NBRC 101832 / S2 / LL).